Consider the following 663-residue polypeptide: UvrABC system protein B (663 aa).

Residues 1–10 (MIDKRDDKPF) show a composition bias toward basic and acidic residues. The disordered stretch occupies residues 1–23 (MIDKRDDKPFKLKSKYKPSGDQP). One can recognise a Helicase ATP-binding domain in the interval 31–418 (DNIEGGEKAQ…TNTIIEQIIR (388 aa)). An ATP-binding site is contributed by 44-51 (GATGTGKT). Residues 97–120 (YYDYYQPEAYVPSSDTYIEKDSSV) carry the Beta-hairpin motif. A Helicase C-terminal domain is found at 435–601 (QMDDLLGEIN…TIKKDIRGLI (167 aa)). The 36-residue stretch at 627 to 662 (KEAINALQKQMQEAAELLDFELAAQMRDLILELKLM) folds into the UVR domain.

The protein belongs to the UvrB family. As to quaternary structure, forms a heterotetramer with UvrA during the search for lesions. Interacts with UvrC in an incision complex.

Its subcellular location is the cytoplasm. Functionally, the UvrABC repair system catalyzes the recognition and processing of DNA lesions. A damage recognition complex composed of 2 UvrA and 2 UvrB subunits scans DNA for abnormalities. Upon binding of the UvrA(2)B(2) complex to a putative damaged site, the DNA wraps around one UvrB monomer. DNA wrap is dependent on ATP binding by UvrB and probably causes local melting of the DNA helix, facilitating insertion of UvrB beta-hairpin between the DNA strands. Then UvrB probes one DNA strand for the presence of a lesion. If a lesion is found the UvrA subunits dissociate and the UvrB-DNA preincision complex is formed. This complex is subsequently bound by UvrC and the second UvrB is released. If no lesion is found, the DNA wraps around the other UvrB subunit that will check the other stand for damage. This Streptococcus pyogenes serotype M1 protein is UvrABC system protein B.